A 244-amino-acid polypeptide reads, in one-letter code: Salivary gland SP38-40.A protein (244 aa).

The N-terminal stretch at 1 to 21 is a signal peptide; the sequence is MRIKFLVVLAVICLFAHYASA. 3 disordered regions span residues 23–91, 137–169, and 206–244; these read GMGG…EKKQ, PPPG…LRKE, and VQGK…DAKK. 2 stretches are compositionally biased toward basic and acidic residues: residues 26 to 86 and 157 to 169; these read GDKK…EVKK and PPKE…LRKE. 2 repeat units span residues 29-34 and 35-40. The interval 29–47 is 3 X 6 AA approximate tandem repeats of K-P-K-D-A-P; it reads KPKDAPKPKDAPKPKEVKP. One copy of the 1-3; approximate repeat lies at 41–47; it reads KPKEVKP. Repeat copies occupy residues 156–159 and 161–164. The tract at residues 156–168 is 3 X 4 AA approximate tandem repeats of K-P-P-K; it reads KPPKEKPPKKLRK. A 2-3; approximate repeat occupies 165–168; sequence KLRK. Positions 209-224 are enriched in basic residues; it reads KQKKGAKKAKGGKKAA. 3 repeat units span residues 225-228, 229-232, and 233-236. The tract at residues 225–240 is 4 X 4 AA approximate tandem repeats of P-K-[PQ]-[GA]; it reads PKPGPKPGPKQADKPK. Positions 235-244 are enriched in basic and acidic residues; the sequence is QADKPKDAKK. A 3-4; approximate repeat occupies 237–240; that stretch reads DKPK.

Salivary gland.

The protein resides in the secreted. Functionally, used by the larvae to construct a supramolecular structure, the larval tube. The protein is Salivary gland SP38-40.A protein (SP38-40.A) of Chironomus tentans (Midge).